A 140-amino-acid polypeptide reads, in one-letter code: Large ribosomal subunit protein uL11 (140 aa).

The protein belongs to the universal ribosomal protein uL11 family. In terms of assembly, part of the ribosomal stalk of the 50S ribosomal subunit. Interacts with L10 and the large rRNA to form the base of the stalk. L10 forms an elongated spine to which L12 dimers bind in a sequential fashion forming a multimeric L10(L12)X complex. One or more lysine residues are methylated.

In terms of biological role, forms part of the ribosomal stalk which helps the ribosome interact with GTP-bound translation factors. The chain is Large ribosomal subunit protein uL11 from Desulforapulum autotrophicum (strain ATCC 43914 / DSM 3382 / VKM B-1955 / HRM2) (Desulfobacterium autotrophicum).